The primary structure comprises 256 residues: tRNA pseudouridine synthase A (256 aa).

Catalysis depends on Asp-52, which acts as the Nucleophile. Residue Tyr-110 participates in substrate binding.

It belongs to the tRNA pseudouridine synthase TruA family. Homodimer.

The catalysed reaction is uridine(38/39/40) in tRNA = pseudouridine(38/39/40) in tRNA. In terms of biological role, formation of pseudouridine at positions 38, 39 and 40 in the anticodon stem and loop of transfer RNAs. This Stenotrophomonas maltophilia (strain R551-3) protein is tRNA pseudouridine synthase A.